Consider the following 591-residue polypeptide: PDZ and LIM domain protein 5 (591 aa).

Serine 2 carries the N-acetylserine modification. Serine 2 carries the phosphoserine modification. In terms of domain architecture, PDZ spans 2 to 85 (SNYNVSLVGP…SLNMTLQRAS (84 aa)). Lysine 89 carries the post-translational modification N6-acetyllysine; alternate. Residue lysine 89 is modified to N6-succinyllysine; alternate. A Glycyl lysine isopeptide (Lys-Gly) (interchain with G-Cter in SUMO2); alternate cross-link involves residue lysine 89. Serine 111, serine 134, and serine 137 each carry phosphoserine. Disordered stretches follow at residues 125–240 (YNKV…GPPR) and 255–334 (THSD…SNRP). Polar residues predominate over residues 134 to 143 (SVSSPKVTSI). Residues 144–161 (PSPSSAFTPAHAATSSHA) show a composition bias toward low complexity. The span at 162-174 (SPPPVAAVTPPPL) shows a compositional bias: pro residues. Polar residues-rich tracts occupy residues 183–195 (ANPSAAQCSSPPN) and 207–217 (PTVTSVCSESA). Phosphoserine occurs at positions 228 and 260. 2 stretches are compositionally biased toward basic and acidic residues: residues 258 to 273 (DASKKRLIEDTEDWRP) and 293 to 304 (EHLKESENDNAK). The segment covering 310–329 (PEPSQQSASPLSAAESLESP) has biased composition (low complexity). A phosphoserine mark is found at serine 313 and serine 318. N6-acetyllysine is present on lysine 346. Residues 348 to 398 (VGSTSVKSPSWQRPNQAAPSTGRISNSASSSGTGAPMKPAVGPPQPSDQDT) are disordered. The segment covering 349 to 380 (GSTSVKSPSWQRPNQAAPSTGRISNSASSSGT) has biased composition (polar residues). Serine 355 and serine 357 each carry phosphoserine. LIM zinc-binding domains are found at residues 413 to 472 (PMCA…FFAP), 472 to 531 (PECG…LFGT), and 531 to 591 (TICR…SVNF).

As to quaternary structure, interacts with various PKC isoforms through the LIM domains. Interacts with actin and alpha-actinin through the PDZ domain. Interacts (via LIM domains) with SIPA1L1/SPAR; this interaction may occur preferentially with isoform 1. Detected in brain, in neurons, including in hippocampal neurons, and glial cells (at protein level). Detected in heart and skeletal muscle.

It localises to the postsynaptic density. Its subcellular location is the presynapse. The protein resides in the postsynapse. It is found in the cytoplasm. The protein localises to the cytosol. Its function is as follows. May play an important role in the heart development by scaffolding PKC to the Z-disk region. May play a role in the regulation of cardiomyocyte expansion. Isoforms lacking the LIM domains may negatively modulate the scaffolding activity of isoform 1. Overexpression promotes the development of heart hypertrophy. Contributes to the regulation of dendritic spine morphogenesis in neurons. May be required to restrain postsynaptic growth of excitatory synapses. Isoform 1, but not isoform 2, expression favors spine thinning and elongation. The polypeptide is PDZ and LIM domain protein 5 (Pdlim5) (Rattus norvegicus (Rat)).